The following is a 328-amino-acid chain: Phosphoserine phosphatase (328 aa).

Residue Asp113 is the Nucleophile of the active site. Residues Asp113 and Asp115 each coordinate Mg(2+). Asp115 acts as the Proton donor in catalysis. Substrate is bound by residues Glu122, Arg158, Ser201–Gly202, and Lys246. Asp269 provides a ligand contact to Mg(2+). Asn272 is a binding site for substrate.

The protein belongs to the HAD-like hydrolase superfamily. SerB family. The cofactor is Mg(2+).

The enzyme catalyses O-phospho-L-serine + H2O = L-serine + phosphate. The catalysed reaction is O-phospho-D-serine + H2O = D-serine + phosphate. Its pathway is amino-acid biosynthesis; L-serine biosynthesis; L-serine from 3-phospho-D-glycerate: step 3/3. This chain is Phosphoserine phosphatase, found in Vibrio cholerae serotype O1 (strain ATCC 39315 / El Tor Inaba N16961).